The primary structure comprises 333 residues: LRGKEDAANNYARGHYTVGKELIEVCADRIRKLADQCEGLQGFLVFHSVGGGTGSGFGSLLLQRLALEYGGKKSKLDFCVYPSPQVSTSVVEPYNSVLSTHSLLEHTDVSFMLDNEAIYNICKKSLDIEKPTYTNLNRLIAQVISSLTSSLRFPGPLNLDINDIQTNLVPFPRLHFVLCSYAPVISKEKSEHENITVDAITNSVFSENNIMAKCQPHLGKYMACCLMYRGNIVPKEAQKAVQNIRNEKSKTVSFVDWSPTGFKCGINNSKPTTVLGENGDNMARTEKSVCMLSNTTAISQVFSRINHKFDLMYIKRAFVHWYVGEGMEEGEGL.

GTP contacts are provided by Ser-48, Gly-52, Thr-53, Thr-88, Asn-115, and Asn-137.

It belongs to the tubulin family. In terms of assembly, dimer of alpha and beta chains. A typical microtubule is a hollow water-filled tube with an outer diameter of 25 nm and an inner diameter of 15 nM. Alpha-beta heterodimers associate head-to-tail to form protofilaments running lengthwise along the microtubule wall with the beta-tubulin subunit facing the microtubule plus end conferring a structural polarity. Microtubules usually have 13 protofilaments but different protofilament numbers can be found in some organisms and specialized cells. Mg(2+) is required as a cofactor. Undergoes a tyrosination/detyrosination cycle, the cyclic removal and re-addition of a C-terminal tyrosine residue by the enzymes tubulin tyrosine carboxypeptidase (TTCP) and tubulin tyrosine ligase (TTL), respectively.

It localises to the cytoplasm. It is found in the cytoskeleton. The catalysed reaction is GTP + H2O = GDP + phosphate + H(+). Functionally, tubulin is the major constituent of microtubules, a cylinder consisting of laterally associated linear protofilaments composed of alpha- and beta-tubulin heterodimers. Microtubules grow by the addition of GTP-tubulin dimers to the microtubule end, where a stabilizing cap forms. Below the cap, tubulin dimers are in GDP-bound state, owing to GTPase activity of alpha-tubulin. The chain is Tubulin alpha chain (tuba) from Dictyostelium purpureum (Slime mold).